A 20-amino-acid polypeptide reads, in one-letter code: Non-specific lipid-transfer protein (20 aa).

It belongs to the plant LTP family.

Its function is as follows. Plant non-specific lipid-transfer proteins transfer phospholipids as well as galactolipids across membranes. May play a role in wax or cutin deposition in the cell walls of expanding epidermal cells and certain secretory tissues. The polypeptide is Non-specific lipid-transfer protein (Citrus sinensis (Sweet orange)).